A 308-amino-acid chain; its full sequence is tRNA pseudouridine synthase B (308 aa).

Asp47 serves as the catalytic Nucleophile.

Belongs to the pseudouridine synthase TruB family. Type 1 subfamily.

It catalyses the reaction uridine(55) in tRNA = pseudouridine(55) in tRNA. Its function is as follows. Responsible for synthesis of pseudouridine from uracil-55 in the psi GC loop of transfer RNAs. This is tRNA pseudouridine synthase B from Rhodospirillum rubrum (strain ATCC 11170 / ATH 1.1.1 / DSM 467 / LMG 4362 / NCIMB 8255 / S1).